The primary structure comprises 213 residues: Probable nicotinate-nucleotide adenylyltransferase (213 aa).

It belongs to the NadD family.

It catalyses the reaction nicotinate beta-D-ribonucleotide + ATP + H(+) = deamido-NAD(+) + diphosphate. The protein operates within cofactor biosynthesis; NAD(+) biosynthesis; deamido-NAD(+) from nicotinate D-ribonucleotide: step 1/1. In terms of biological role, catalyzes the reversible adenylation of nicotinate mononucleotide (NaMN) to nicotinic acid adenine dinucleotide (NaAD). The sequence is that of Probable nicotinate-nucleotide adenylyltransferase from Citrobacter koseri (strain ATCC BAA-895 / CDC 4225-83 / SGSC4696).